Here is a 313-residue protein sequence, read N- to C-terminus: MGANSIPTDATIDLDEQISQLMQCKPLSEQQVRALCEKAKEILMDESNVQPVKSPVTICGDIHGQFHDLAELFRIGGMCPDTNYLFMGDYVDRGYYSVETVTLLVALKMRYPQRITILRGNHESRQITQVYGFYDECLRKYGNANVWKIFTDLFDYFPLTALVESEIFCLHGGLSPSIETLDNIRNFDRVQEVPHEGPMCDLLWSDPDDRCGWGISPRGAGYTFGQDISEQFNHTNNLKLIARAHQLVMDGYNWAHEQKVVTIFSAPNYCYRCGNMASILEVDDCRNHTFIQFEPAPRRGEPDVTRRTPDYFL.

Aspartate 61, histidine 63, aspartate 89, and asparagine 121 together coordinate Mn(2+). Catalysis depends on histidine 122, which acts as the Proton donor. Positions 171 and 245 each coordinate Mn(2+). Leucine 313 bears the Leucine methyl ester mark.

The protein belongs to the PPP phosphatase family. PP-2A subfamily. In terms of assembly, PP2A consists of a common heterodimeric core enzyme, composed of a 36 kDa catalytic subunit (subunit C) and a 65 kDa constant regulatory subunit (subunit A), that associates with a variety of regulatory subunits such as subunits B (the R2/B/PR55/B55, R3/B''/PR72/PR130/PR59 and R5/B'/B56 families). Interacts with ACR4. Interacts with TAP46. Interacts with SIC/RON3. Mn(2+) serves as cofactor. In terms of processing, reversibly methyl esterified on Leu-313 by leucine carboxyl methyltransferase 1 (LCMT1) and pectin methylesterase 1 (PME1). Carboxyl methylation influences the affinity of the catalytic subunit for the different regulatory subunits, thereby modulating the PP2A holoenzyme's substrate specificity, enzyme activity and cellular localization. Post-translationally, phosphorylation of either threonine (by autophosphorylation-activated protein kinase) or tyrosine results in inactivation of the phosphatase. Auto-dephosphorylation has been suggested as a mechanism for reactivation.

It is found in the cytoplasm. It carries out the reaction O-phospho-L-seryl-[protein] + H2O = L-seryl-[protein] + phosphate. It catalyses the reaction O-phospho-L-threonyl-[protein] + H2O = L-threonyl-[protein] + phosphate. Its function is as follows. Functions redundantly with PP2A4, and is involved in establishing auxin gradients, apical-basal axis of polarity and root and shoot apical meristem during embryogenesis. May dephosphorylate PIN1 and regulate its subcellular distribution for polar auxin transport. Involved in the regulation of formative cell division in roots by dephosphorylating ACR4 protein kinase. This chain is Serine/threonine-protein phosphatase PP2A-3 catalytic subunit, found in Arabidopsis thaliana (Mouse-ear cress).